The sequence spans 214 residues: Imidazole glycerol phosphate synthase subunit HisH (214 aa).

A Glutamine amidotransferase type-1 domain is found at 2–214 (RVALIDYGSG…LIANFLRWAP (213 aa)). The Nucleophile role is filled by C88. Active-site residues include H194 and E196.

As to quaternary structure, heterodimer of HisH and HisF.

The protein resides in the cytoplasm. It carries out the reaction 5-[(5-phospho-1-deoxy-D-ribulos-1-ylimino)methylamino]-1-(5-phospho-beta-D-ribosyl)imidazole-4-carboxamide + L-glutamine = D-erythro-1-(imidazol-4-yl)glycerol 3-phosphate + 5-amino-1-(5-phospho-beta-D-ribosyl)imidazole-4-carboxamide + L-glutamate + H(+). The catalysed reaction is L-glutamine + H2O = L-glutamate + NH4(+). It participates in amino-acid biosynthesis; L-histidine biosynthesis; L-histidine from 5-phospho-alpha-D-ribose 1-diphosphate: step 5/9. Its function is as follows. IGPS catalyzes the conversion of PRFAR and glutamine to IGP, AICAR and glutamate. The HisH subunit catalyzes the hydrolysis of glutamine to glutamate and ammonia as part of the synthesis of IGP and AICAR. The resulting ammonia molecule is channeled to the active site of HisF. In Rhodospirillum rubrum (strain ATCC 11170 / ATH 1.1.1 / DSM 467 / LMG 4362 / NCIMB 8255 / S1), this protein is Imidazole glycerol phosphate synthase subunit HisH.